A 337-amino-acid polypeptide reads, in one-letter code: Probable cytosolic iron-sulfur protein assembly protein CIAO1 homolog (337 aa).

7 WD repeats span residues 15 to 54 (DDTSRVWMTCWHHGGRILASCGDDKAVRVWSLVGEPDSKM), 65 to 104 (SHTRAVRSVAFSNDGKCLVSASFDASVVVYQQEDGEFAEV), 109 to 148 (GHESEVKCAVFSKSDEFLATCSRDKSVWFWQQDEDEDFSV), 154 to 193 (PHTQDVKQVAWHPTEDLLVSCSYDSSIRFYRFDGEDWVTQ), 199 to 238 (CHVGTVWSIAFDTEGHRLVTVGEDHCIQLFVRENIGSKSA), 253 to 292 (NTRWPLYSVAWNSTNDVIATGGGDCKIRLFKISSTPESPV), and 301 to 337 (RHELDVNHVAWNPNPKFSNLLTSASDDGTIRLWELEI).

It belongs to the WD repeat CIA1 family.

Functionally, essential component of the cytosolic iron-sulfur (Fe/S) protein assembly machinery. Required for the maturation of extramitochondrial Fe/S proteins. The protein is Probable cytosolic iron-sulfur protein assembly protein CIAO1 homolog of Caenorhabditis elegans.